The sequence spans 368 residues: MENMDDFSPENVLAPPPPPPPMKKSTDLFMQRSNSFVSKATRDSWDRMFDEAHGADVLIHTDDNGLIYAHSNVIGMASDVIRGMMKQHKRKSHRKSISILGVPHHALRVFIRFLYSSCYEKQDMEDFAIHLLVLSHVYVVPHLKRVCESEFESSLLNKENVIDVFQLALLCDAPRLGLLCHRMILNNFEEVSTSEGWQAMKESHPRLQKELLRSVAYELNSLKQRNRKQKEIQTYTQLYEAMEAFVHICRDGCREIGPTKTETPHMSCGFQACNGLEQLLKHLAGCKLRSIPGGCSRCKRMWQLLELHSRICVDSEQCKVPLCSSLKERMKTQSRKDEKRWKLLVRNVLSTKRIGGSPFFLQAIDVTL.

Positions 1–25 (MENMDDFSPENVLAPPPPPPPMKKS) are disordered. Residues 55–123 (ADVLIHTDDN…LYSSCYEKQD (69 aa)) form the BTB domain. The segment at 233 to 324 (QTYTQLYEAM…SEQCKVPLCS (92 aa)) adopts a TAZ-type zinc-finger fold. Residues 335–358 (RKDEKRWKLLVRNVLSTKRIGGSP) form a caM-binding region.

As to quaternary structure, interacts with CUL3A. As to expression, preferentially expressed in young leaves, roots and stems.

The protein resides in the cytoplasm. Its pathway is protein modification; protein ubiquitination. In terms of biological role, may act as a substrate-specific adapter of an E3 ubiquitin-protein ligase complex (CUL3-RBX1-BTB) which mediates the ubiquitination and subsequent proteasomal degradation of target proteins. In Arabidopsis thaliana (Mouse-ear cress), this protein is BTB/POZ and TAZ domain-containing protein 5 (BT5).